Consider the following 151-residue polypeptide: Hemoglobin-2 (151 aa).

Thr-2 carries the N-acetylthreonine modification. Residues 3-148 (TLTNPQKAAI…ICKTLGDYMK (146 aa)) enclose the Globin domain. Heme b is bound at residue His-97.

This sequence belongs to the globin family. In terms of assembly, homotetramer.

The protein resides in the cytoplasm. The chain is Hemoglobin-2 from Phacoides pectinatus (Thick lucine).